The chain runs to 572 residues: Ribonuclease Y (572 aa).

The helical transmembrane segment at Met-1–Gln-21 threads the bilayer. Disordered stretches follow at residues His-59–Glu-85 and Gln-110–Asp-142. 2 stretches are compositionally biased toward basic and acidic residues: residues Gln-110–Lys-119 and Leu-129–Asp-142. The 61-residue stretch at Ser-262–Leu-322 folds into the KH domain. The HD domain occupies Val-388 to Ala-481.

Belongs to the RNase Y family.

The protein resides in the cell membrane. Functionally, endoribonuclease that initiates mRNA decay. The polypeptide is Ribonuclease Y (Deinococcus radiodurans (strain ATCC 13939 / DSM 20539 / JCM 16871 / CCUG 27074 / LMG 4051 / NBRC 15346 / NCIMB 9279 / VKM B-1422 / R1)).